A 407-amino-acid chain; its full sequence is Protease ElaD (407 aa).

Residue H231 is part of the active site. The active-site Nucleophile is the C317.

It belongs to the peptidase C79 family.

In terms of biological role, protease that can act as an efficient and specific deubiquitinating enzyme in vitro. Does not possess desumoylating and deneddylating activities. The physiological substrate is unknown. The sequence is that of Protease ElaD (elaD) from Escherichia coli O157:H7.